Consider the following 464-residue polypeptide: V-type ATP synthase beta chain (464 aa).

This sequence belongs to the ATPase alpha/beta chains family.

In terms of biological role, produces ATP from ADP in the presence of a proton gradient across the membrane. The V-type beta chain is a regulatory subunit. This Streptococcus sanguinis (strain SK36) protein is V-type ATP synthase beta chain.